The chain runs to 124 residues: Membrane magnesium transporter 2 (124 aa).

Methionine 1 is a topological domain (cytoplasmic). Residues 2–22 (VAWLWKVLVGVGLSALAHAAF) form a helical membrane-spanning segment. At 23-44 (SAAQHRSHTRLAEMKYEPLPTD) the chain is on the lumenal side. A helical membrane pass occupies residues 45–65 (IVLQTLLAFALTCYGVVHTAG). Topologically, residues 66–124 (DFRDRDATSELKNVTFDTLRNRPSFYVFQHSGSSLLQPSDTTRSSNLNVPSSDDIRLKF) are cytoplasmic.

Belongs to the membrane magnesium transporter (TC 1.A.67) family.

The protein resides in the golgi apparatus membrane. It is found in the early endosome membrane. Functionally, mediates Mg(2+) transport. This is Membrane magnesium transporter 2 from Rattus norvegicus (Rat).